A 397-amino-acid chain; its full sequence is Diphosphomevalonate decarboxylase (397 aa).

Residues 19 to 22 (YWGK), arginine 74, 153 to 158 (SGSACR), and threonine 209 contribute to the (R)-5-diphosphomevalonate site. The segment at 378–397 (GPGPQDTKSSLIDPETGLPR) is disordered.

It belongs to the diphosphomevalonate decarboxylase family. Homodimer.

The enzyme catalyses (R)-5-diphosphomevalonate + ATP = isopentenyl diphosphate + ADP + phosphate + CO2. It participates in isoprenoid biosynthesis; isopentenyl diphosphate biosynthesis via mevalonate pathway; isopentenyl diphosphate from (R)-mevalonate: step 3/3. Diphosphomevalonate decarboxylase; part of the second module of ergosterol biosynthesis pathway that includes the middle steps of the pathway. The second module is carried out in the vacuole and involves the formation of farnesyl diphosphate, which is also an important intermediate in the biosynthesis of ubiquinone, dolichol, heme and prenylated proteins. Activity by the mevalonate kinase ERG12 first converts mevalonate into 5-phosphomevalonate. 5-phosphomevalonate is then further converted to 5-diphosphomevalonate by the phosphomevalonate kinase ERG8. The diphosphomevalonate decarboxylase MVD1/ERG19 then produces isopentenyl diphosphate. The isopentenyl-diphosphate delta-isomerase IDI1 then catalyzes the 1,3-allylic rearrangement of the homoallylic substrate isopentenyl (IPP) to its highly electrophilic allylic isomer, dimethylallyl diphosphate (DMAPP). Finally the farnesyl diphosphate synthase ERG20 catalyzes the sequential condensation of isopentenyl pyrophosphate with dimethylallyl pyrophosphate, and then with the resultant geranylpyrophosphate to the ultimate product farnesyl pyrophosphate. This chain is Diphosphomevalonate decarboxylase, found in Eremothecium gossypii (strain ATCC 10895 / CBS 109.51 / FGSC 9923 / NRRL Y-1056) (Yeast).